Consider the following 90-residue polypeptide: HssA/B-like protein 4 (90 aa).

Belongs to the hssA/B family.

In Dictyostelium discoideum (Social amoeba), this protein is HssA/B-like protein 4 (hssl4).